The chain runs to 350 residues: uncharacterized protein (350 aa).

The first 26 residues, 1–26, serve as a signal peptide directing secretion; that stretch reads MKKSGWLVVALIALVVLGVVTSIAVN.

This is an uncharacterized protein from Archaeoglobus fulgidus (strain ATCC 49558 / DSM 4304 / JCM 9628 / NBRC 100126 / VC-16).